Reading from the N-terminus, the 621-residue chain is Glutathione-regulated potassium-efflux system protein KefC (621 aa).

12 helical membrane passes run 4-24 (HTLI…PIAV), 26-46 (LGLG…PWGL), 54-74 (AILH…GLEL), 90-110 (GALQ…LLGL), 114-134 (VAEL…MQAM), 149-169 (FAVL…IPLL), 178-198 (LVAF…VVAL), 218-238 (VFSA…EEVG), 270-290 (GLLL…GTLV), 294-314 (LRIV…LWLI), 326-346 (RWFA…FGAA), and 359-379 (ALTL…VLLT). An RCK N-terminal domain is found at 399-518 (QPRVIVAGFG…AGVEAPERET (120 aa)). The disordered stretch occupies residues 598–621 (GWQGTEEGRHTGDIADEPENKPSA).

It belongs to the monovalent cation:proton antiporter 2 (CPA2) transporter (TC 2.A.37) family. KefC subfamily. In terms of assembly, homodimer. Interacts with the regulatory subunit KefF.

The protein resides in the cell inner membrane. Its function is as follows. Pore-forming subunit of a potassium efflux system that confers protection against electrophiles. Catalyzes K(+)/H(+) antiport. The polypeptide is Glutathione-regulated potassium-efflux system protein KefC (Klebsiella pneumoniae (strain 342)).